The chain runs to 520 residues: MDFANLAAQLNAGTILPEGIVIVTLMGVLIVDLILGRTSSRWIGYLAIAGLLAAIVALYFQWDATNPISFTGGFIGDDLSIIFRGIIALSAVVTILMSIRYVEQSGTALAEFIAILLTATLGGMFVSGASELVMIFISLETLSISSYLLTGYTKRDPRSNEAALKYLLIGASSTAVFLYGVSLLYGLSGGQTELSAIANGIITANVGQSLGAVIALVFVIAGIGFKISAAPFHQWTPDVYEGAPTPVIAFLSVGSKAAGFALAIRLLTTVFPFVAEEWKFVFTALAVLSMILGNVVALAQTSMKRMLAYSSIAQAGFVMIGLIAGTDAGYASMIFYLLVYLFMNLCGFTCIILFSLRTGTDQIAEYSGLYQKDPLLTLGLSISLLSLGGIPPLAGFFGKIYLFWAGWQAGLYWLVLLGLVTSVVSIYYYIRVVKMMVVKEPQEMSDVVKNYPEIRWNLPGFRPLQVGLVLTLIATSVAGILSNPLFTLANNSVANTAILQTTKVVSTQVSAIPAEKSEGL.

14 consecutive transmembrane segments (helical) span residues 15 to 35 (ILPE…DLIL), 42 to 62 (WIGY…YFQW), 79 to 99 (LSII…LMSI), 106 to 126 (GTAL…GMFV), 132 to 152 (LVMI…LTGY), 167 to 187 (LLIG…LYGL), 210 to 230 (LGAV…ISAA), 244 to 264 (PTPV…ALAI), 280 to 300 (FVFT…ALAQ), 306 to 326 (MLAY…IAGT), 334 to 354 (IFYL…IILF), 378 to 398 (LGLS…GFFG), 400 to 420 (IYLF…LGLV), and 466 to 486 (VGLV…NPLF).

This sequence belongs to the complex I subunit 2 family. As to quaternary structure, NDH-1 can be composed of about 15 different subunits; different subcomplexes with different compositions have been identified which probably have different functions.

It localises to the cellular thylakoid membrane. The catalysed reaction is a plastoquinone + NADH + (n+1) H(+)(in) = a plastoquinol + NAD(+) + n H(+)(out). The enzyme catalyses a plastoquinone + NADPH + (n+1) H(+)(in) = a plastoquinol + NADP(+) + n H(+)(out). Its function is as follows. NDH-1 shuttles electrons from an unknown electron donor, via FMN and iron-sulfur (Fe-S) centers, to quinones in the respiratory and/or the photosynthetic chain. The immediate electron acceptor for the enzyme in this species is believed to be plastoquinone. Couples the redox reaction to proton translocation, and thus conserves the redox energy in a proton gradient. Cyanobacterial NDH-1 also plays a role in inorganic carbon-concentration. In Trichormus variabilis (strain ATCC 29413 / PCC 7937) (Anabaena variabilis), this protein is NAD(P)H-quinone oxidoreductase subunit 2.